A 394-amino-acid polypeptide reads, in one-letter code: MVTIETRADQMVLNLGPHHPSTHGVLRLIVTLDGENVVDCRPVLGYLHRGMEKIGENRTIIQYLPYCSRWDYAAAMMNEAPVVNAPEAMAGVKVPRRASYIRVIMLELSRIANHLLWVGPFLLDMGAQSPFFYILRERELILDLFEAATGLRMVGNNYFRVGGVTVDLPYGWVDKAHDLCDVIPGKIDEYERLITNNPIFRRRIENLGYISREDAINWGLSGPMLRASGVKWDLRKVDHYEIYDELDWDIAWDTGGDCLARYIVRIKEMRESVKIIRQALDQLPGGPYEQLEARRLAEGPKSEWNSFDYQFIGKKSSPTFKIPTGEYYARSEEAKGELGIYVVGRDDTTPWRWKIRTPDFANLAILPMILQGTKVADLVVVLGSIDIIMGSVDR.

It belongs to the complex I 49 kDa subunit family. In terms of assembly, NDH-1 can be composed of about 15 different subunits; different subcomplexes with different compositions have been identified which probably have different functions.

Its subcellular location is the cell inner membrane. The enzyme catalyses a plastoquinone + NADH + (n+1) H(+)(in) = a plastoquinol + NAD(+) + n H(+)(out). The catalysed reaction is a plastoquinone + NADPH + (n+1) H(+)(in) = a plastoquinol + NADP(+) + n H(+)(out). Its function is as follows. NDH-1 shuttles electrons from an unknown electron donor, via FMN and iron-sulfur (Fe-S) centers, to quinones in the respiratory and/or the photosynthetic chain. The immediate electron acceptor for the enzyme in this species is believed to be plastoquinone. Couples the redox reaction to proton translocation, and thus conserves the redox energy in a proton gradient. Cyanobacterial NDH-1 also plays a role in inorganic carbon-concentration. The chain is NAD(P)H-quinone oxidoreductase subunit H 2 from Gloeobacter violaceus (strain ATCC 29082 / PCC 7421).